Reading from the N-terminus, the 96-residue chain is Ubiquitin-related modifier 1 (96 aa).

G96 is modified (1-thioglycine). A Glycyl lysine isopeptide (Gly-Lys) (interchain with K-? in acceptor proteins) cross-link involves residue G96.

The protein belongs to the URM1 family. In terms of processing, C-terminal thiocarboxylation occurs in 2 steps, it is first acyl-adenylated (-COAMP) via the hesA/moeB/thiF part of UBA4, then thiocarboxylated (-COSH) via the rhodanese domain of UBA4.

Its subcellular location is the cytoplasm. It participates in tRNA modification; 5-methoxycarbonylmethyl-2-thiouridine-tRNA biosynthesis. Functionally, acts as a sulfur carrier required for 2-thiolation of mcm(5)S(2)U at tRNA wobble positions of cytosolic tRNA(Lys), tRNA(Glu) and tRNA(Gln). Serves as sulfur donor in tRNA 2-thiolation reaction by being thiocarboxylated (-COSH) at its C-terminus by the MOCS3 homolog UBA4. The sulfur is then transferred to tRNA to form 2-thiolation of mcm(5)S(2)U. Prior mcm(5) tRNA modification by the elongator complex is required for 2-thiolation. Also acts as a ubiquitin-like protein (UBL) that is covalently conjugated via an isopeptide bond to lysine residues of target proteins such as AHP1. The thiocarboxylated form serves as substrate for conjugation and oxidative stress specifically induces the formation of UBL-protein conjugates. The polypeptide is Ubiquitin-related modifier 1 (Encephalitozoon cuniculi (strain GB-M1) (Microsporidian parasite)).